The chain runs to 416 residues: Solute carrier family 35 member D3 (416 aa).

Transmembrane regions (helical) follow at residues 9-29 (VLGI…NILL), 38-58 (FSFL…SLEL), 64-84 (LIAV…VAVL), 103-123 (MYVV…VLVL), 131-151 (GVLA…AGDL), 155-175 (PIGY…LVLI), 187-207 (LTAQ…CSFA), 224-244 (AMVC…FTTL), 257-277 (FVGV…FSDV), and 280-300 (TSLF…YCVA). A disordered region spans residues 334–384 (MEELPGEGGNGRSEGGEAAGGPAQESRQEVRGSPRGVPLVAGSSEEGSRRS). A compositionally biased stretch (gly residues) spans 339 to 352 (GEGGNGRSEGGEAA).

The protein belongs to the TPT transporter family. SLC35D subfamily. Could interact with ATG14, BECN1 and PIK3C3 that form the PI3KC3-C1/AIC/autophagy initiation complex; enhancing the formation of the AIC and promoting autophagy.

The protein localises to the cytoplasmic vesicle. Its subcellular location is the secretory vesicle. It is found in the synaptic vesicle membrane. It localises to the early endosome membrane. The protein resides in the endoplasmic reticulum membrane. It carries out the reaction UDP-alpha-D-glucose(in) = UDP-alpha-D-glucose(out). With respect to regulation, inhibited by proton uncouplers that directly abolish the proton electrochemical gradient. In terms of biological role, probable UDP-glucose transmembrane transporter involved in UDP-glucose transport from the cytosol to the lumen of synaptic vesicles. It is involved in platelet dense granules maturation. Its function is as follows. Alternatively, could function as a molecular adapter enhancing the formation of the PI3KC3-C1/AIC/autophagy initiation complex to promote autophagy in dopaminergic neurons. Could also regulate the plasma membrane localization of the D(1A) dopamine receptor/DRD1 and dopamine signaling. The chain is Solute carrier family 35 member D3 from Homo sapiens (Human).